The primary structure comprises 44 residues: Mu-conotoxin-like Cal 12.1.2f (44 aa).

4 disulfide bridges follow: Cys3/Cys15, Cys10/Cys27, Cys17/Cys32, and Cys26/Cys38. A 6'-bromotryptophan modification is found at Trp16. At Pro22 the chain carries 4-hydroxyproline. 6'-bromotryptophan occurs at positions 36 and 37. 4-hydroxyproline is present on Pro39. Trp43 carries the 6'-bromotryptophan modification.

As to expression, expressed by the venom duct.

The protein localises to the secreted. Mu-conotoxins block voltage-gated sodium channels. This toxin reversibly blocks voltage-gated sodium channel in cephalopods, with no alteration in the voltage dependence of sodium conductance or on the kinetics of inactivation. This chain is Mu-conotoxin-like Cal 12.1.2f, found in Californiconus californicus (California cone).